We begin with the raw amino-acid sequence, 177 residues long: ATP synthase subunit delta (177 aa).

It belongs to the ATPase delta chain family. In terms of assembly, F-type ATPases have 2 components, F(1) - the catalytic core - and F(0) - the membrane proton channel. F(1) has five subunits: alpha(3), beta(3), gamma(1), delta(1), epsilon(1). F(0) has three main subunits: a(1), b(2) and c(10-14). The alpha and beta chains form an alternating ring which encloses part of the gamma chain. F(1) is attached to F(0) by a central stalk formed by the gamma and epsilon chains, while a peripheral stalk is formed by the delta and b chains.

Its subcellular location is the cell membrane. Functionally, f(1)F(0) ATP synthase produces ATP from ADP in the presence of a proton or sodium gradient. F-type ATPases consist of two structural domains, F(1) containing the extramembraneous catalytic core and F(0) containing the membrane proton channel, linked together by a central stalk and a peripheral stalk. During catalysis, ATP synthesis in the catalytic domain of F(1) is coupled via a rotary mechanism of the central stalk subunits to proton translocation. In terms of biological role, this protein is part of the stalk that links CF(0) to CF(1). It either transmits conformational changes from CF(0) to CF(1) or is implicated in proton conduction. This Buchnera aphidicola subsp. Acyrthosiphon pisum (strain 5A) protein is ATP synthase subunit delta.